Reading from the N-terminus, the 234-residue chain is GTP cyclohydrolase 1 type 2 homolog (234 aa).

Residues His-61, His-62, Asp-80, His-195, and Glu-199 each coordinate a divalent metal cation.

Belongs to the GTP cyclohydrolase I type 2/NIF3 family. As to quaternary structure, homohexamer.

The polypeptide is GTP cyclohydrolase 1 type 2 homolog (Methanothermobacter thermautotrophicus (strain ATCC 29096 / DSM 1053 / JCM 10044 / NBRC 100330 / Delta H) (Methanobacterium thermoautotrophicum)).